The sequence spans 139 residues: Peptide methionine sulfoxide reductase MsrB (139 aa).

The MsrB domain occupies 9–131 (TPSDNTEMTE…NSASLSFIDD (123 aa)). Zn(2+) is bound by residues C48, C51, C97, and C100. The active-site Nucleophile is the C120.

The protein belongs to the MsrB Met sulfoxide reductase family. It depends on Zn(2+) as a cofactor.

The catalysed reaction is L-methionyl-[protein] + [thioredoxin]-disulfide + H2O = L-methionyl-(R)-S-oxide-[protein] + [thioredoxin]-dithiol. In Pectobacterium atrosepticum (strain SCRI 1043 / ATCC BAA-672) (Erwinia carotovora subsp. atroseptica), this protein is Peptide methionine sulfoxide reductase MsrB.